The chain runs to 578 residues: Triokinase/FMN cyclase (578 aa).

A DhaK domain is found at 9-336; sequence SVAGCADDAL…IDAETTASAW (328 aa). Residues 56 to 59, Lys109, and Asp114 contribute to the dihydroxyacetone site; that span reads GSGH. The Tele-hemiaminal-histidine intermediate role is filled by His221. Position 350 is a phosphoserine (Ser350). Residues 372 to 571 form the DhaL domain; the sequence is KQMVLVLEWV…AAAILRAILE (200 aa). ATP-binding positions include 401-404, 446-447, Gly486, and 494-495; these read DGDC, SS, and TM. Ser511 and Ser545 each carry phosphoserine. 556-558 serves as a coordination point for ATP; it reads DPG.

Homodimer. Interacts with IFIH1 (via the CARD domains), the interaction is inhibited by viral infection. Mg(2+) serves as cofactor. Mn(2+) is required as a cofactor. It depends on Co(2+) as a cofactor.

It carries out the reaction dihydroxyacetone + ATP = dihydroxyacetone phosphate + ADP + H(+). It catalyses the reaction D-glyceraldehyde + ATP = D-glyceraldehyde 3-phosphate + ADP + H(+). The enzyme catalyses FAD = riboflavin cyclic-4',5'-phosphate + AMP + H(+). With respect to regulation, each activity is inhibited by the substrate(s) of the other. Its function is as follows. Catalyzes both the phosphorylation of dihydroxyacetone and of glyceraldehyde, and the splitting of ribonucleoside diphosphate-X compounds among which FAD is the best substrate. Represses IFIH1-mediated cellular antiviral response. This chain is Triokinase/FMN cyclase (TKFC), found in Bos taurus (Bovine).